We begin with the raw amino-acid sequence, 160 residues long: Small ribosomal subunit protein uS9 (160 aa).

Residues 1–18 (MTDTSNSLQDLGTLTGAP) are compositionally biased toward polar residues. The interval 1-37 (MTDTSNSLQDLGTLTGAPSAQPVKSVEPKIDAQGRAY) is disordered.

Belongs to the universal ribosomal protein uS9 family.

The sequence is that of Small ribosomal subunit protein uS9 from Hyphomonas neptunium (strain ATCC 15444).